The following is a 730-amino-acid chain: Ribosomal RNA large subunit methyltransferase K/L (730 aa).

The region spanning 46-157 is the THUMP domain; sequence TAYRLCVWSR…RGEAILSLDL (112 aa). Residues 394–418 form a disordered region; that stretch reads GERREAQPEGTEARQQVPQASEPAR.

Belongs to the methyltransferase superfamily. RlmKL family.

The protein resides in the cytoplasm. It catalyses the reaction guanosine(2445) in 23S rRNA + S-adenosyl-L-methionine = N(2)-methylguanosine(2445) in 23S rRNA + S-adenosyl-L-homocysteine + H(+). It carries out the reaction guanosine(2069) in 23S rRNA + S-adenosyl-L-methionine = N(2)-methylguanosine(2069) in 23S rRNA + S-adenosyl-L-homocysteine + H(+). Functionally, specifically methylates the guanine in position 2445 (m2G2445) and the guanine in position 2069 (m7G2069) of 23S rRNA. This chain is Ribosomal RNA large subunit methyltransferase K/L, found in Pseudomonas putida (strain ATCC 700007 / DSM 6899 / JCM 31910 / BCRC 17059 / LMG 24140 / F1).